Here is a 91-residue protein sequence, read N- to C-terminus: Large ribosomal subunit protein uL22 (91 aa).

The protein belongs to the universal ribosomal protein uL22 family. As to quaternary structure, part of the 50S ribosomal subunit.

This protein binds specifically to 23S rRNA; its binding is stimulated by other ribosomal proteins, e.g. L4, L17, and L20. It is important during the early stages of 50S assembly. It makes multiple contacts with different domains of the 23S rRNA in the assembled 50S subunit and ribosome. Functionally, the globular domain of the protein is located near the polypeptide exit tunnel on the outside of the subunit, while an extended beta-hairpin is found that lines the wall of the exit tunnel in the center of the 70S ribosome. The chain is Large ribosomal subunit protein uL22 (rplV) from Clover yellow edge phytoplasma.